Consider the following 208-residue polypeptide: UPF0637 protein BCB4264_A4063 (208 aa).

It belongs to the UPF0637 family.

This is UPF0637 protein BCB4264_A4063 from Bacillus cereus (strain B4264).